The following is a 76-amino-acid chain: Acyl carrier protein (76 aa).

In terms of domain architecture, Carrier spans 1–76 (MSIEERVKKI…SAIDYVQNNQ (76 aa)). O-(pantetheine 4'-phosphoryl)serine is present on Ser36.

It belongs to the acyl carrier protein (ACP) family. 4'-phosphopantetheine is transferred from CoA to a specific serine of apo-ACP by AcpS. This modification is essential for activity because fatty acids are bound in thioester linkage to the sulfhydryl of the prosthetic group.

The protein localises to the cytoplasm. The protein operates within lipid metabolism; fatty acid biosynthesis. Functionally, carrier of the growing fatty acid chain in fatty acid biosynthesis. The chain is Acyl carrier protein from Actinobacillus succinogenes (strain ATCC 55618 / DSM 22257 / CCUG 43843 / 130Z).